Here is a 370-residue protein sequence, read N- to C-terminus: Elongation factor Ts, mitochondrial (370 aa).

The N-terminal 29 residues, 1 to 29 (MALLSAAPRALRLPRRLPLGAALPALRAL), are a transit peptide targeting the mitochondrion.

Belongs to the EF-Ts family.

Its subcellular location is the mitochondrion. Functionally, associates with the EF-Tu.GDP complex and induces the exchange of GDP to GTP. It remains bound to the aminoacyl-tRNA.EF-Tu.GTP complex up to the GTP hydrolysis stage on the ribosome. The polypeptide is Elongation factor Ts, mitochondrial (Cryptococcus neoformans var. neoformans serotype D (strain B-3501A) (Filobasidiella neoformans)).